We begin with the raw amino-acid sequence, 270 residues long: SURF1-like protein (270 aa).

A run of 2 helical transmembrane segments spans residues 7-29 (GFKL…VYRY) and 246-265 (YIGT…FRYM).

The protein belongs to the SURF1 family.

The protein localises to the mitochondrion inner membrane. In terms of biological role, probably involved in the biogenesis of the COX complex. The polypeptide is SURF1-like protein (surf1-1) (Dictyostelium discoideum (Social amoeba)).